Here is a 150-residue protein sequence, read N- to C-terminus: Large ribosomal subunit protein bL9 (150 aa).

It belongs to the bacterial ribosomal protein bL9 family.

Binds to the 23S rRNA. This is Large ribosomal subunit protein bL9 from Burkholderia pseudomallei (strain 668).